We begin with the raw amino-acid sequence, 85 residues long: Alpha-mammal toxin AaH2 (85 aa).

A signal peptide spans 1–19 (MNYLVMISLALLFVTGVES). One can recognise an LCN-type CS-alpha/beta domain in the interval 21-83 (KDGYIVDDVN…VRTKGPGRCH (63 aa)). 4 disulfide bridges follow: Cys31–Cys82, Cys35–Cys55, Cys41–Cys65, and Cys45–Cys67. At His83 the chain carries Histidine amide.

Belongs to the long (4 C-C) scorpion toxin superfamily. Sodium channel inhibitor family. Alpha subfamily. The amidation of His-83 is not necessary for toxicity. Expressed by the venom gland.

The protein localises to the secreted. Its function is as follows. Alpha toxin that binds voltage-independently at site-3 of sodium channels (Nav), inhibits the inactivation of the activated channels, and weakly inhibits activation, thereby blocking neuronal transmission. Inserts into voltage-sensing domain IV to stabilize a deactivated state, thereby preventing fast-inactivation. Principally slows the inactivation process of TTX-sensitive sodium channels. It is active on mammalian brain Nav1.2/SCN2A (EC(50)human=0.72 nM, EC(50)rat=2.6 nM), on rat skeletal muscle Nav1.4/SCN4A (EC(50)=2.2 nM), and on human neuronal Nav1.7/SCN9A (EC(50)=6.8-51.7 nM). In vivo, intraplantar injection into mice induces spontaneous pain responses. This is Alpha-mammal toxin AaH2 from Androctonus australis (Sahara scorpion).